Consider the following 327-residue polypeptide: Phenylalanine--tRNA ligase alpha subunit (327 aa).

E252 serves as a coordination point for Mg(2+).

It belongs to the class-II aminoacyl-tRNA synthetase family. Phe-tRNA synthetase alpha subunit type 1 subfamily. In terms of assembly, tetramer of two alpha and two beta subunits. Mg(2+) is required as a cofactor.

Its subcellular location is the cytoplasm. The catalysed reaction is tRNA(Phe) + L-phenylalanine + ATP = L-phenylalanyl-tRNA(Phe) + AMP + diphosphate + H(+). In Aeromonas salmonicida (strain A449), this protein is Phenylalanine--tRNA ligase alpha subunit.